We begin with the raw amino-acid sequence, 166 residues long: NADH-quinone oxidoreductase subunit J (166 aa).

5 helical membrane passes run 1-21 (MEFA…RVIT), 28-48 (ALLY…SLGA), 54-74 (LEII…VMML), 92-112 (IWVG…VVLA), and 134-154 (LYGP…AALV).

Belongs to the complex I subunit 6 family. As to quaternary structure, composed of 13 different subunits. Subunits NuoA, H, J, K, L, M, N constitute the membrane sector of the complex.

Its subcellular location is the cell inner membrane. The enzyme catalyses a quinone + NADH + 5 H(+)(in) = a quinol + NAD(+) + 4 H(+)(out). NDH-1 shuttles electrons from NADH, via FMN and iron-sulfur (Fe-S) centers, to quinones in the respiratory chain. The immediate electron acceptor for the enzyme in this species is believed to be ubiquinone. Couples the redox reaction to proton translocation (for every two electrons transferred, four hydrogen ions are translocated across the cytoplasmic membrane), and thus conserves the redox energy in a proton gradient. In Pseudomonas aeruginosa (strain ATCC 15692 / DSM 22644 / CIP 104116 / JCM 14847 / LMG 12228 / 1C / PRS 101 / PAO1), this protein is NADH-quinone oxidoreductase subunit J (nuoJ).